Here is a 161-residue protein sequence, read N- to C-terminus: MNELRRRWQVMSQRERLMALACGGLVVLCLLYYLIWAPWQESVRQWQMTVERERQTVRWMQQQPPRFRRRKVRGGRXPVAISANGIGAQSAVRYGITVLRMQPQESQVSVTLARSDFNNLLHWLAELEQKNGVITQGIDVTAVPNSPGIVEVTRLSLERVL.

At M1–R16 the chain is on the cytoplasmic side. Residues L17 to A37 form a helical membrane-spanning segment. Topologically, residues P38–L161 are periplasmic.

It belongs to the GSP M family. As to quaternary structure, type II secretion system is composed of four main components: the outer membrane complex, the inner membrane complex, the cytoplasmic secretion ATPase and the periplasm-spanning pseudopilus. Forms homodimers. Interacts with OutL/GspL. Interacts with OutE/GspE and OutF/GspF.

The protein localises to the cell inner membrane. In terms of biological role, inner membrane component of the type II secretion system required for the energy-dependent secretion of extracellular factors such as proteases and toxins from the periplasm. Plays a role in the complex assembly and recruits OutL resulting in a stable complex in the inner membrane. Provides thus a link between the energy-providing OutE protein in the cytoplasm and the rest of the T2SS machinery. The chain is Type II secretion system protein M (outM) from Dickeya chrysanthemi (Pectobacterium chrysanthemi).